The sequence spans 200 residues: Probable nicotinate-nucleotide adenylyltransferase (200 aa).

It belongs to the NadD family.

It carries out the reaction nicotinate beta-D-ribonucleotide + ATP + H(+) = deamido-NAD(+) + diphosphate. It functions in the pathway cofactor biosynthesis; NAD(+) biosynthesis; deamido-NAD(+) from nicotinate D-ribonucleotide: step 1/1. In terms of biological role, catalyzes the reversible adenylation of nicotinate mononucleotide (NaMN) to nicotinic acid adenine dinucleotide (NaAD). The protein is Probable nicotinate-nucleotide adenylyltransferase of Clostridium acetobutylicum (strain ATCC 824 / DSM 792 / JCM 1419 / IAM 19013 / LMG 5710 / NBRC 13948 / NRRL B-527 / VKM B-1787 / 2291 / W).